Reading from the N-terminus, the 496-residue chain is probable leucine aminopeptidase 2 (496 aa).

An N-terminal signal peptide occupies residues 1–16 (MRSLLWASLLSGVLAG). Residues 111 to 205 (PSVEVTADVA…SLEDGQKLIK (95 aa)) form the PA domain. N-linked (GlcNAc...) asparagine glycosylation occurs at Asn-224. Zn(2+) contacts are provided by His-248 and Asp-260. The Proton acceptor role is filled by Glu-292. Glu-293 is a binding site for Zn(2+). The N-linked (GlcNAc...) asparagine glycan is linked to Asn-307. Position 321 (Asp-321) interacts with Zn(2+). N-linked (GlcNAc...) asparagine glycosylation is found at Asn-341 and Asn-402. A Zn(2+)-binding site is contributed by His-419. N-linked (GlcNAc...) asparagine glycosylation is found at Asn-424 and Asn-458. The interval 475–496 (KRAPKTHAHVSGSGCWHSQVEA) is disordered.

Belongs to the peptidase M28 family. M28A subfamily. Monomer. Zn(2+) is required as a cofactor.

It is found in the secreted. Functionally, extracellular aminopeptidase that releases a wide variety of amino acids from natural peptides. The polypeptide is probable leucine aminopeptidase 2 (lap2) (Aspergillus oryzae (strain ATCC 42149 / RIB 40) (Yellow koji mold)).